The following is a 182-amino-acid chain: NADH-ubiquinone oxidoreductase 20 kDa subunit (182 aa).

Positions 57, 58, 122, and 152 each coordinate [4Fe-4S] cluster.

Belongs to the complex I 20 kDa subunit family. The cofactor is [4Fe-4S] cluster.

It is found in the mitochondrion. It catalyses the reaction a ubiquinone + NADH + 5 H(+)(in) = a ubiquinol + NAD(+) + 4 H(+)(out). The chain is NADH-ubiquinone oxidoreductase 20 kDa subunit (NAD10) from Reclinomonas americana.